Consider the following 471-residue polypeptide: Serine/threonine-protein kinase sid1 (471 aa).

Positions 9–260 (YTLLRKLGSG…AKELLQHPFI (252 aa)) constitute a Protein kinase domain. ATP-binding positions include 15–23 (LGSGSFGVV) and Lys-38. Asp-129 functions as the Proton acceptor in the catalytic mechanism.

This sequence belongs to the protein kinase superfamily. STE Ser/Thr protein kinase family. STE20 subfamily. Interacts with cdc14.

The protein resides in the cytoplasm. The protein localises to the cytoskeleton. It localises to the microtubule organizing center. It is found in the spindle pole body. The catalysed reaction is L-seryl-[protein] + ATP = O-phospho-L-seryl-[protein] + ADP + H(+). It catalyses the reaction L-threonyl-[protein] + ATP = O-phospho-L-threonyl-[protein] + ADP + H(+). Functionally, has a role in the septation initiation network (SIN) required for cytokinesis. The sequence is that of Serine/threonine-protein kinase sid1 (sid1) from Schizosaccharomyces pombe (strain 972 / ATCC 24843) (Fission yeast).